Consider the following 242-residue polypeptide: 1-(5-phosphoribosyl)-5-[(5-phosphoribosylamino)methylideneamino] imidazole-4-carboxamide isomerase (242 aa).

Aspartate 8 functions as the Proton acceptor in the catalytic mechanism. The active-site Proton donor is aspartate 130.

It belongs to the HisA/HisF family.

It is found in the cytoplasm. The enzyme catalyses 1-(5-phospho-beta-D-ribosyl)-5-[(5-phospho-beta-D-ribosylamino)methylideneamino]imidazole-4-carboxamide = 5-[(5-phospho-1-deoxy-D-ribulos-1-ylimino)methylamino]-1-(5-phospho-beta-D-ribosyl)imidazole-4-carboxamide. The protein operates within amino-acid biosynthesis; L-histidine biosynthesis; L-histidine from 5-phospho-alpha-D-ribose 1-diphosphate: step 4/9. The polypeptide is 1-(5-phosphoribosyl)-5-[(5-phosphoribosylamino)methylideneamino] imidazole-4-carboxamide isomerase (Thioalkalivibrio sulfidiphilus (strain HL-EbGR7)).